We begin with the raw amino-acid sequence, 500 residues long: Cysteine--tRNA ligase (500 aa).

Zn(2+) is bound at residue Cys30. The 'HIGH' region signature appears at 32–42 (PTVYDYAHIGN). Zn(2+)-binding residues include Cys224, His263, and Glu267. A 'KMSKS' region motif is present at residues 296 to 300 (KMSKS). Lys299 contacts ATP.

The protein belongs to the class-I aminoacyl-tRNA synthetase family. In terms of assembly, monomer. The cofactor is Zn(2+).

The protein localises to the cytoplasm. It carries out the reaction tRNA(Cys) + L-cysteine + ATP = L-cysteinyl-tRNA(Cys) + AMP + diphosphate. In Bartonella bacilliformis (strain ATCC 35685 / KC583 / Herrer 020/F12,63), this protein is Cysteine--tRNA ligase.